We begin with the raw amino-acid sequence, 63 residues long: U-reduvitoxin-Pr9a (63 aa).

The N-terminal stretch at 1–19 (MRFFSLFTFLVAFIAAALA) is a signal peptide. The propeptide occupies 20–42 (APVEIGEDLFALRPTGAKRDIIL). A disulfide bridge connects residues C47 and C60.

Expressed by the venom gland.

The protein localises to the secreted. The protein is U-reduvitoxin-Pr9a of Platymeris rhadamanthus (Red spot assassin bug).